Reading from the N-terminus, the 216-residue chain is MTDTTLRHRTARVERVTKESSIVVELDLDGTGRTDISTGVPFYDHMLTALGAHASFDLSVRAEGDIQIEAHHTVEDTAIVFGQALGKALGDKAGIRRFGDAFIPMDETLAHAAVDVSGRPYCVHTGEPEHLLHAVIPGSPVRGTGEPGAPYSTVLNRHVFESIALNARIALHVRVLYGRDQHHVTEAEFKAVARALRAAVEFDPRVSGVPSTKGTL.

It belongs to the imidazoleglycerol-phosphate dehydratase family.

It is found in the cytoplasm. It carries out the reaction D-erythro-1-(imidazol-4-yl)glycerol 3-phosphate = 3-(imidazol-4-yl)-2-oxopropyl phosphate + H2O. It functions in the pathway amino-acid biosynthesis; L-histidine biosynthesis; L-histidine from 5-phospho-alpha-D-ribose 1-diphosphate: step 6/9. The chain is Imidazoleglycerol-phosphate dehydratase from Nocardia farcinica (strain IFM 10152).